A 348-amino-acid chain; its full sequence is D-alanine--D-alanine ligase (348 aa).

Residues 132–334 form the ATP-grasp domain; it reads KRVLESIGIP…YPDLIEVLVT (203 aa). 162–217 contacts ATP; that stretch reads LARLTFPIFVKPANMGSSVGISKAQTKVELRKAIQLALTYDSRVLIEQGVVAREIE. Mg(2+) is bound by residues Asp288, Glu301, and Asn303.

It belongs to the D-alanine--D-alanine ligase family. Mg(2+) serves as cofactor. It depends on Mn(2+) as a cofactor.

It is found in the cytoplasm. It catalyses the reaction 2 D-alanine + ATP = D-alanyl-D-alanine + ADP + phosphate + H(+). Its pathway is cell wall biogenesis; peptidoglycan biosynthesis. Its function is as follows. Cell wall formation. The protein is D-alanine--D-alanine ligase of Streptococcus pyogenes serotype M2 (strain MGAS10270).